Reading from the N-terminus, the 350-residue chain is RNA 3'-terminal phosphate cyclase (350 aa).

ATP is bound by residues glutamine 107 and 290-294 (FLGDQ). Histidine 316 (tele-AMP-histidine intermediate) is an active-site residue.

Belongs to the RNA 3'-terminal cyclase family. Type 1 subfamily.

It localises to the cytoplasm. It catalyses the reaction a 3'-end 3'-phospho-ribonucleotide-RNA + ATP = a 3'-end 2',3'-cyclophospho-ribonucleotide-RNA + AMP + diphosphate. In terms of biological role, catalyzes the conversion of 3'-phosphate to a 2',3'-cyclic phosphodiester at the end of RNA. The mechanism of action of the enzyme occurs in 3 steps: (A) adenylation of the enzyme by ATP; (B) transfer of adenylate to an RNA-N3'P to produce RNA-N3'PP5'A; (C) and attack of the adjacent 2'-hydroxyl on the 3'-phosphorus in the diester linkage to produce the cyclic end product. The biological role of this enzyme is unknown but it is likely to function in some aspects of cellular RNA processing. In Gloeothece citriformis (strain PCC 7424) (Cyanothece sp. (strain PCC 7424)), this protein is RNA 3'-terminal phosphate cyclase.